A 477-amino-acid polypeptide reads, in one-letter code: Aspartyl/glutamyl-tRNA(Asn/Gln) amidotransferase subunit B (477 aa).

The protein belongs to the GatB/GatE family. GatB subfamily. Heterotrimer of A, B and C subunits.

The enzyme catalyses L-glutamyl-tRNA(Gln) + L-glutamine + ATP + H2O = L-glutaminyl-tRNA(Gln) + L-glutamate + ADP + phosphate + H(+). It carries out the reaction L-aspartyl-tRNA(Asn) + L-glutamine + ATP + H2O = L-asparaginyl-tRNA(Asn) + L-glutamate + ADP + phosphate + 2 H(+). In terms of biological role, allows the formation of correctly charged Asn-tRNA(Asn) or Gln-tRNA(Gln) through the transamidation of misacylated Asp-tRNA(Asn) or Glu-tRNA(Gln) in organisms which lack either or both of asparaginyl-tRNA or glutaminyl-tRNA synthetases. The reaction takes place in the presence of glutamine and ATP through an activated phospho-Asp-tRNA(Asn) or phospho-Glu-tRNA(Gln). This is Aspartyl/glutamyl-tRNA(Asn/Gln) amidotransferase subunit B from Legionella pneumophila (strain Corby).